A 422-amino-acid chain; its full sequence is MNIEKVIAREVLDSRGNPTVEAEVFLDSGFSGRAIVPSGASTGTHEALELRDGDGRYGGKGVLRAVQNVNEVLAPALVGLDASEQGAVDAAMLALDGTPNKGRLGGNAILAVSLATARAAANELGVPLYRYLGGSNAKTLPVPMMNVINGGAHADNNVDFQEFMVMPVGAPTFREALRYGAETFHALKKVLAGRGYNTNVGDEGGFAPDLKSNEEALEVLLEAIEKAGYEPGKDIAIALDPATTELYRDGQYHLESEGRSLSTAEMVDFWADWVSRYPIVSIEDGLAEDDWDGWRLLTERLGDRVQLVGDDLFVTNPERLARGIETGVGNAILVKVNQIGTLTESMDAIELAKRSRYGTIISHRSGESEDAFIADLAVATNAGQIKTGSASRSDRIAKYNQLLRIEDGLGDRAVYLGRRALR.

Q161 contributes to the (2R)-2-phosphoglycerate binding site. Residue E203 is the Proton donor of the active site. Residues D240, E283, and D310 each contribute to the Mg(2+) site. (2R)-2-phosphoglycerate-binding residues include K335, R364, S365, and K386. K335 (proton acceptor) is an active-site residue.

The protein belongs to the enolase family. Mg(2+) is required as a cofactor.

The protein localises to the cytoplasm. It localises to the secreted. It is found in the cell surface. It catalyses the reaction (2R)-2-phosphoglycerate = phosphoenolpyruvate + H2O. Its pathway is carbohydrate degradation; glycolysis; pyruvate from D-glyceraldehyde 3-phosphate: step 4/5. In terms of biological role, catalyzes the reversible conversion of 2-phosphoglycerate (2-PG) into phosphoenolpyruvate (PEP). It is essential for the degradation of carbohydrates via glycolysis. This is Enolase from Deinococcus geothermalis (strain DSM 11300 / CIP 105573 / AG-3a).